Here is a 1379-residue protein sequence, read N- to C-terminus: DNA-directed RNA polymerase subunit beta (1379 aa).

This sequence belongs to the RNA polymerase beta chain family. The RNAP catalytic core consists of 2 alpha, 1 beta, 1 beta' and 1 omega subunit. When a sigma factor is associated with the core the holoenzyme is formed, which can initiate transcription.

It catalyses the reaction RNA(n) + a ribonucleoside 5'-triphosphate = RNA(n+1) + diphosphate. In terms of biological role, DNA-dependent RNA polymerase catalyzes the transcription of DNA into RNA using the four ribonucleoside triphosphates as substrates. In Ruegeria sp. (strain TM1040) (Silicibacter sp.), this protein is DNA-directed RNA polymerase subunit beta.